Here is a 1282-residue protein sequence, read N- to C-terminus: MAISKKAGAKKAGAVSKPPPSKGASSKGGVAKADWREGFKKAQAGVSDMTLLSKVTNEAINDNLQKRFQNAEIYTYIGNVLISVNPFRDLGIYTEDILQSYRGKNRLEMTPHVFAIAEGAYYNMNAYKENQCVIISGESGAGKTEAAKRIMQYIAAVSGGSNSGIQDVKDMVLATNPLLESFGCAKTLRNNNSSRHGKYLEIMFNAHGEPIGANITNYLLEKNRVVQQIHDERNFHIFYQFTKAATATHRENYGIQGPEAYAYTANSQCLDVNGIDDHADFRETISAMNTIGLTADEQDNIFRMIAAILWIGNVQYVENQEGNAEISDPGVPDFVAYLLEVDAGNVTKALTQRIMETQRGGRRGSVYEVPLNPTQAAAARDALAKAIYNNMFDWIVERINQSMNPRTQSSNVIGVLDIYGFEIFDNNSFEQLCINYVNEKLQQIFIELTLKKEQEEYAYEQIQWTPIKYFNNKIVCDLIEEKRPPGIFSALNDACATAHADPTAADNSFIQRTGMLSSNPHFDSRGTKFLIKHYAGDVMYNVQGMTDKNKDSLLKDILDLVDSSTNSYLQKLFPDRPDPNSKKRPPTAGDRIKASANALVENLMRAQPSYIRTIKPNQNKSPTEYDSQAILHQIKYLGLQENIRVRRAGFAYRNTFEKMVERFYLLSPNTSYAGEYTWQGDARSGCERILTDTGIAREEWQMGVTKAFIKNPETLFALETMRDRYWHNMAMRIQRAYRNYLRYKEECARRIQRMWKNNKEGLQYIQLRDYGHQVLAGRKERRRFSLLGLRRFMGDYLDVGGANGKGGGSAEGQMLRQATGMAAGEAVAFSSRAQLLVSRLGRSSVRSPRFLILTDKAVYILVTQLVNKQVSTTCERRINLGAISAVGLSNLRDDWLVLNVNNAEEADPILHCYFKTELVTHLLQRTNGAINVIVSNSLEYSKKKGKKAQITFRKDETVQKDDVYKSSAVSVCSGEPANSVSRPAPKKKPGLVRPITQGKLLRAGGPSNANNKPKPRAIPRSTPTPAKLPGSGAAGTARPAAAVGSASAGAGVGATRSAPRPPPPPPAAVAPSEPQVARYKALYVFATENAGEMALDKDDVVEVTQKDETGSGWWLVKKNGVEGWAPSNYLELIVQAAPKPKAAPAPPVKRAAPVAPSATTASQRPAVAAKPAFGGAAAGVVQPKPVVKTTPAGGKPHERAAAVQADAAAAPVSVMPGLGAPGGFAAVLAKKKAENAAAAAAAGAGANGKGAGAPPAVAAKPVVAPKPAGSNGRAMPPPPPRR.

The segment at 1-30 (MAISKKAGAKKAGAVSKPPPSKGASSKGGV) is disordered. Residues 44–723 (AGVSDMTLLS…TLFALETMRD (680 aa)) form the Myosin motor domain. ATP is bound at residue 137-144 (GESGAGKT). Residue Ser365 is modified to Phosphoserine. The interval 412-494 (VIGVLDIYGF…PGIFSALNDA (83 aa)) is actin-binding. The disordered stretch occupies residues 569-590 (LQKLFPDRPDPNSKKRPPTAGD). 2 consecutive IQ domains span residues 727–747 (HNMA…KEEC) and 748–773 (ARRI…YGHQ). The region spanning 781-977 (RRRFSLLGLR…AVSVCSGEPA (197 aa)) is the TH1 domain. The segment at 973 to 1073 (SGEPANSVSR…PPPAAVAPSE (101 aa)) is disordered. Residues 1029–1058 (PGSGAAGTARPAAAVGSASAGAGVGATRSA) show a composition bias toward low complexity. The span at 1059 to 1068 (PRPPPPPPAA) shows a compositional bias: pro residues. The SH3 domain maps to 1074–1135 (PQVARYKALY…PSNYLELIVQ (62 aa)). The disordered stretch occupies residues 1237 to 1282 (AAAAAAGAGANGKGAGAPPAVAAKPVVAPKPAGSNGRAMPPPPPRR). A compositionally biased stretch (low complexity) spans 1252-1269 (GAPPAVAAKPVVAPKPAG).

This sequence belongs to the TRAFAC class myosin-kinesin ATPase superfamily. Myosin family. Post-translationally, phosphorylation of the TEDS site (Ser-365) is required for the polarization of the actin cytoskeleton. Phosphorylation probably activates the myosin-I ATPase activity.

It localises to the cytoplasm. The protein localises to the cytoskeleton. The protein resides in the actin patch. In terms of biological role, type-I myosin implicated in the organization of the actin cytoskeleton. Required for proper actin cytoskeleton polarization. At the cell cortex, assembles in patch-like structures together with proteins from the actin-polymerizing machinery and promotes actin assembly. Functions as actin nucleation-promoting factor (NPF) for the Arp2/3 complex. This Mycosarcoma maydis (Corn smut fungus) protein is Myosin-1 (myo1).